The sequence spans 262 residues: (5R,7aS)-5-hydroxy-7a-methyl-1-oxo-2,3,5,6,7,7a-hexahydro-1H-indene-carboxyl-CoA reductase (262 aa).

7 residues coordinate NAD(+): D50, D77, V78, N104, Y170, K174, and A203. Y170 acts as the Proton acceptor in catalysis.

This sequence belongs to the short-chain dehydrogenases/reductases (SDR) family.

It catalyses the reaction (5R,7aS)-5-hydroxy-7a-methyl-1-oxo-2,3,5,6,7,7a-hexahydro-1H-indene-carboxyl-CoA + NAD(+) = (7aS)-7a-methyl-1,5-dioxo-2,3,5,6,7,7a-hexahydro-1H-indene-carboxyl-CoA + NADH + H(+). The protein operates within steroid metabolism; cholesterol degradation. Requires the presence of IpdC. In terms of biological role, involved in the final steps of cholesterol and steroid degradation. Probably catalyzes the oxidation of the 5-OH group of (5R,7aS)-5-hydroxy-7a-methyl-1-oxo-2,3,5,6,7,7a-hexahydro-1H-indene-carboxyl-CoA, leading to the formation of HIEC-CoA. The polypeptide is (5R,7aS)-5-hydroxy-7a-methyl-1-oxo-2,3,5,6,7,7a-hexahydro-1H-indene-carboxyl-CoA reductase (Mycobacterium tuberculosis (strain ATCC 25618 / H37Rv)).